The chain runs to 375 residues: Succinyl-diaminopimelate desuccinylase (375 aa).

Residue His66 coordinates Zn(2+). Asp68 is a catalytic residue. Asp99 is a Zn(2+) binding site. The active-site Proton acceptor is Glu133. Residues Glu134, Glu162, and His348 each contribute to the Zn(2+) site.

This sequence belongs to the peptidase M20A family. DapE subfamily. In terms of assembly, homodimer. Zn(2+) is required as a cofactor. Requires Co(2+) as cofactor.

It carries out the reaction N-succinyl-(2S,6S)-2,6-diaminopimelate + H2O = (2S,6S)-2,6-diaminopimelate + succinate. The protein operates within amino-acid biosynthesis; L-lysine biosynthesis via DAP pathway; LL-2,6-diaminopimelate from (S)-tetrahydrodipicolinate (succinylase route): step 3/3. Catalyzes the hydrolysis of N-succinyl-L,L-diaminopimelic acid (SDAP), forming succinate and LL-2,6-diaminopimelate (DAP), an intermediate involved in the bacterial biosynthesis of lysine and meso-diaminopimelic acid, an essential component of bacterial cell walls. In Klebsiella pneumoniae (strain 342), this protein is Succinyl-diaminopimelate desuccinylase.